The following is a 581-amino-acid chain: Intermediate filament protein ifa-2 (581 aa).

Disordered regions lie at residues 1–35 and 47–68; these read MTDP…GSGN and SSVS…RDNR. Positions 1 to 74 are head; the sequence is MTDPDSYRSS…RDNREREKKE (74 aa). Residues 7 to 28 are compositionally biased toward polar residues; it reads YRSSITSRPSFNRTVTSSSQNY. The IF rod domain occupies 71 to 424; the sequence is EKKEIMELND…QMLEGNSEGN (354 aa). The segment at 75–106 is coil 1A; sequence IMELNDRLASYIEKVRFLDAQNRKLDADLKML. A linker 1 region spans residues 107–120; it reads QGRFGKSTGSVKVM. Residues 121–258 are coil 1B; that stretch reads YEMEITTATN…RGFETELKEL (138 aa). The tract at residues 259-276 is linker 12; the sequence is QAQAARDTTSENREYFKN. The coil 2 stretch occupies residues 277–424; sequence ELANAMRDIR…QMLEGNSEGN (148 aa). The tail stretch occupies residues 425–578; the sequence is GLRQLVEKVV…THIQRQSQQT (154 aa). The disordered stretch occupies residues 449–469; that stretch reads RVVKGEHSSRTSYQRSAKGNV. Residues 457 to 574 form the LTD domain; sequence SRTSYQRSAK…EERATHIQRQ (118 aa).

Belongs to the intermediate filament family. As to quaternary structure, forms some heteromeric filaments with ifb-1. As to expression, mainly expressed in regions of the hypodermis adjacent to muscle. Expressed in longitudinal stripes where the mechanosensory neurons interface with the hypodermis. Also expressed to the uterine seam and within the uterine-vulval cells.

The protein localises to the cell junction. The protein resides in the hemidesmosome. Its function is as follows. Cytoplasmic intermediate filaments provide mechanical strength to cells. Essential protein, involved in attachment structures in epidermal cells that connect muscles to the external cuticle. Probably acts by forming hypodermal hemidesmosome complexes that help mediate muscle-cuticle force transduction. Although expressed during embryogenesis, it is not required for embryonic development of muscle-cuticle linkages nor for the localization of other proteins to the hemidesmosomes in embryos. In Caenorhabditis elegans, this protein is Intermediate filament protein ifa-2.